The chain runs to 356 residues: Heat-inducible transcription repressor HrcA (356 aa).

It belongs to the HrcA family.

In terms of biological role, negative regulator of class I heat shock genes (grpE-dnaK-dnaJ and groELS operons). Prevents heat-shock induction of these operons. This is Heat-inducible transcription repressor HrcA from Brucella abortus (strain S19).